A 182-amino-acid chain; its full sequence is Peptide deformylase (182 aa).

Fe cation is bound by residues cysteine 100 and histidine 142. Glutamate 143 is a catalytic residue. Histidine 146 provides a ligand contact to Fe cation.

The protein belongs to the polypeptide deformylase family. Requires Fe(2+) as cofactor.

The catalysed reaction is N-terminal N-formyl-L-methionyl-[peptide] + H2O = N-terminal L-methionyl-[peptide] + formate. In terms of biological role, removes the formyl group from the N-terminal Met of newly synthesized proteins. Requires at least a dipeptide for an efficient rate of reaction. N-terminal L-methionine is a prerequisite for activity but the enzyme has broad specificity at other positions. This Bartonella bacilliformis (strain ATCC 35685 / KC583 / Herrer 020/F12,63) protein is Peptide deformylase.